We begin with the raw amino-acid sequence, 356 residues long: Mitogen-activated protein kinase PMK1 (356 aa).

A Protein kinase domain is found at 24 to 312 (YDIQDVVGEG…VEEALKHPYL (289 aa)). ATP is bound by residues 30-38 (VGEGAYGVV) and K53.

The protein belongs to the protein kinase superfamily. CMGC Ser/Thr protein kinase family. MAP kinase subfamily. The cofactor is Mg(2+). Post-translationally, phosphorylated by MST7.

It carries out the reaction L-seryl-[protein] + ATP = O-phospho-L-seryl-[protein] + ADP + H(+). It catalyses the reaction L-threonyl-[protein] + ATP = O-phospho-L-threonyl-[protein] + ADP + H(+). Its function is as follows. Mitogen-activated protein kinase; part of the MST11-MST7-PMK1 MAP kinase (MAPK) cascade that is essential for appressorium formation, penetration and invasive growth. Central regulator of appressorium development that acts downstream of the cAMP signal. The MST11-MST7-PMK1 MAP kinase cascade transduces signals from the cell surface sensors MDB2 and SHO1 that recognize various surface signals such as surface hydrophobicity, cutin monomers, and rice leaf waxes. Regulates expression of secreted fungal effector proteins implicated of host immune defenses, preventing reactive oxygen species generation and excessive callose deposition at plasmodesmata. Furthermore, controls the hyphal constriction required for fungal growth from one rice cell to the neighboring cell, enabling host tissue colonization and blast disease. Targets downstream of the PMK1-MAPK pathway include transcription factor MST12 and pathogenicity-related genes GAS1 and GAS2, both of which are expressed during appressorium formation, even if regulation of MST12 is not associated with expression of GAS1 or GAS2. This is Mitogen-activated protein kinase PMK1 from Pyricularia oryzae (Rice blast fungus).